The following is a 324-amino-acid chain: Zinc finger C2HC domain-containing protein 1A (324 aa).

The C2HC/C3H-type 1 zinc-finger motif lies at 15 to 44; sequence ELLPCKICGRTFFPVALKKHGPICKKTATK. Positions 19, 22, 34, and 38 each coordinate Zn(2+). The tract at residues 43–83 is disordered; it reads TKKRKTFDSSRQRAEGTDIPTVKPLKPRPEPPKKPSNWRRK. Positions 48–58 are enriched in basic and acidic residues; that stretch reads TFDSSRQRAEG. The segment at 118-147 adopts a C2HC/C3H-type 2 zinc-finger fold; the sequence is DYIQCPYCQRRFNENAADRHINFCKEQAAR. Zn(2+)-binding residues include C122, C125, H137, and C141. Disordered regions lie at residues 150–224 and 236–259; these read NKGK…LSPS and NVKPRNSTPPSLARNPAPGVLTNK. Composition is skewed to low complexity over residues 176 to 187 and 196 to 215; these read SNSPGTASSGSS and GKTVVGVPSGKVSSSSSSLG. Phosphoserine is present on S222. A Phosphothreonine modification is found at T243. At S291 the chain carries Phosphoserine.

Belongs to the ZC2HC1 family. Zn(2+) serves as cofactor.

In Pongo abelii (Sumatran orangutan), this protein is Zinc finger C2HC domain-containing protein 1A (ZC2HC1A).